Reading from the N-terminus, the 462-residue chain is Transcription factor-like protein EUC1 (462 aa).

Disordered regions lie at residues 11–43 (GFGGYGSLDDDDSDRDSERRNHDLGQRTITTSP) and 66–97 (RPTDAAQPPIVSTSTSASATEPTNRIGPGRIK). Phosphoserine occurs at positions 17 and 23. Positions 26 to 35 (DSERRNHDLG) are enriched in basic and acidic residues. The interval 81-140 (SASATEPTNRIGPGRIKETPETNFNAFLIAQLTRMEEQNANLKEEISLMKKEQELFFLEN) is homodimerization region. The stretch at 105–135 (NAFLIAQLTRMEEQNANLKEEISLMKKEQEL) forms a coiled coil. Disordered regions lie at residues 190–214 (QEAARVGNPSTSTQAHQSQSRSTNW) and 226–289 (GDPR…RNRR). A compositionally biased stretch (polar residues) spans 197-214 (NPSTSTQAHQSQSRSTNW). Residue lysine 231 forms a Glycyl lysine isopeptide (Lys-Gly) (interchain with G-Cter in SUMO) linkage. Phosphoserine occurs at positions 237 and 249. Over residues 240-251 (ENGEYDGNESDE) the composition is skewed to acidic residues. The span at 252–282 (NATTRNLPLNNPDSVSNADDSNNQLDGTGNE) shows a compositional bias: polar residues. Position 254 is a phosphothreonine (threonine 254). Positions 296-385 (YKLNRAIQNV…QAIKVVENIR (90 aa)) are GCR1 DNA-binding region. A compositionally biased stretch (polar residues) spans 441-455 (SLQQPHSIPNSSTGT). Residues 441–462 (SLQQPHSIPNSSTGTPEHDQDT) are disordered.

In terms of assembly, homodimer. Interacts with SLX5. In terms of processing, sumoylated at Lys-231 and subsequently ubiquitinated by the SUMO-targeted ubiquitin ligase (STUbL) complex SLX5/SLX8.

It is found in the chromosome. Its function is as follows. Transcription factor-like protein that binds to specific DNA motifs called ub-HS-motif associated with several locations where proteins other than histone H2B are ubiquitinated (ub-hotspots). Ubiquitination at these sites depends on the SUMO-targeted ubiquitin ligase (STUbL) complex SLX5/SLX8 and protein turnover on the CDC48 segregase. UBC9, SIZ1, or SIZ2 sumoylate DNA-bound EUC1 to stabilize its DNA-binding. Sumoylated EUC1 acts a cofactor required for the recruitment of the SLX5/SLX8 STUbL complex via specific contacts between EUC1 and SLX5, as well as an additional SUMO-mediated interaction. SLX5/SLX8 then ubiquitinates EUC1 and presumably other targets at ub-hotspots, and the CDC48/UFD1/NPL4 complex, together with UBX4 and UBX5, removes Lys-48-linked ubiquitinated proteins from chromatin. Ubiquitinated proteins could be either degraded by the proteasome or recycled by deubiquitination. EUC1 itself does not seem to underlie extensive turnover, as it is a very stable protein. EUC1 is able to act as a transcription factor, but its function at ub-hotspots does not seem to depend on this ability. EUC1-mediated ub-hotspots are crucial during stress responses when gene expression control is impaired. This Saccharomyces cerevisiae (strain ATCC 204508 / S288c) (Baker's yeast) protein is Transcription factor-like protein EUC1.